Reading from the N-terminus, the 247-residue chain is 3(1)-hydroxy-L-isoleucine 4-dioxygenase (247 aa).

Fe cation is bound by residues H160, D162, and H213.

This sequence belongs to the iron/ascorbate-dependent oxidoreductase family. L-ascorbate is required as a cofactor. Fe(2+) serves as cofactor.

The enzyme catalyses 3(1)-hydroxy-L-isoleucine + 2-oxoglutarate + O2 = (4S)-3(1),4-dihydroxy-L-isoleucine + succinate + CO2. Functionally, catalyzes the hydroxylation of L-4'-hydroxyisoleucine (4'-HIL) at the C-4 position to form L-4,4'-dihydroxyisoleucine (4,4'-DIHIL). Together with HilA, catalyzes the two step conversion of L-isoleucine into L-4,4'-dihydroxyisoleucine. In vitro, in the absence of HilA, can also catalyze the oxidation of L-methionine and the C-4-hydroxylation of L-leucine and L-isoleucine. The polypeptide is 3(1)-hydroxy-L-isoleucine 4-dioxygenase (Pantoea ananatis (strain AJ13355)).